A 277-amino-acid chain; its full sequence is F-actin-capping protein subunit beta isoforms 1 and 2 (277 aa).

The residue at position 2 (Ser2) is an N-acetylserine.

Belongs to the F-actin-capping protein beta subunit family. As to quaternary structure, component of the F-actin capping complex, composed of a heterodimer of an alpha and a beta subunit. Component of the WASH complex. In terms of assembly, component of the F-actin capping complex, composed of a heterodimer of an alpha and a beta subunit. Subunit of dynactin, a multiprotein complex part of a tripartite complex with dynein and a adapter, such as BICDL1, BICD2 or HOOK3. The dynactin complex is built around ACTR1A/ACTB filament and consists of an actin-related filament composed of a shoulder domain, a pointed end and a barbed end. Its length is defined by its flexible shoulder domain. In terms of tissue distribution, isoform 1 is detected in pectoral muscle, cardiac muscle and gizzard. Isoform 2 is detected in brain and liver (at protein level). Isoform 2 is the predominant isoform of nonmuscle tissues and isoform 1 is the predominant isoform of muscle tissues.

It localises to the cytoplasm. It is found in the myofibril. Its subcellular location is the sarcomere. The protein localises to the z line. The protein resides in the i band. It localises to the cytoskeleton. Functionally, F-actin-capping proteins bind in a Ca(2+)-independent manner to the fast growing ends of actin filaments (barbed end) thereby blocking the exchange of subunits at these ends. Unlike other capping proteins (such as gelsolin and severin), these proteins do not sever actin filaments. May play a role in the regulation of cell morphology and cytoskeletal organization. Its function is as follows. Forms, with CAPZB, the barbed end of the fast growing ends of actin filaments in the dynactin complex and stabilizes dynactin structure. The dynactin multiprotein complex activates the molecular motor dynein for ultra-processive transport along microtubules. This Gallus gallus (Chicken) protein is F-actin-capping protein subunit beta isoforms 1 and 2 (CAPZB).